The sequence spans 372 residues: MKYDLIIIGSGSVGAAAGYYATRAGLNVLMTDAHMPPHQHGSHHGDTRLIRHAYGEGEKYVPLVLRAQTLWDELSRHNEDDPIFVRSGVINLGPADSAFLANVAHSAEQWQLNVEKLDAQGIMARWPEIRVPDNYIGLFETDSGFLRSELAIKTWIQLAKEAGCAQLFNCPVTAIRHDDDGVTIETADGEYQAKKAIVCAGTWVKDLLPELPVQPVRKVFAWYQADGRYSVKNKFPAFTGELPNGDQYYGFPAENDALKIGKHNGGQVIHSADERVPFAEVVSDGSEAFPFLRNVLPGIGCCLYGAACTYDNSPDEDFIIDTLPDHDNTLFITGLSGHGFKFASVLGEIAADFAQDKKSDFDLTPFRLSRFQ.

Asp-4–His-34 serves as a coordination point for FAD. Cys-308 carries the post-translational modification S-8alpha-FAD cysteine.

The protein belongs to the MSOX/MTOX family. MTOX subfamily. In terms of assembly, monomer. FAD is required as a cofactor.

The catalysed reaction is N(alpha)-methyl-L-tryptophan + O2 + H2O = L-tryptophan + formaldehyde + H2O2. In terms of biological role, catalyzes the oxidative demethylation of N-methyl-L-tryptophan. The sequence is that of N-methyl-L-tryptophan oxidase from Escherichia coli O139:H28 (strain E24377A / ETEC).